Consider the following 546-residue polypeptide: Chaperonin GroEL 1 (546 aa).

ATP contacts are provided by residues 30-33, Lys-51, 87-91, Gly-415, 479-481, and Asp-495; these read TLGP, DGTTT, and NAA. A disordered region spans residues 526–546; it reads KEDAPMPGGMPGGMGGMGMDM. A compositionally biased stretch (gly residues) spans 534–546; it reads GMPGGMGGMGMDM.

It belongs to the chaperonin (HSP60) family. As to quaternary structure, forms a cylinder of 14 subunits composed of two heptameric rings stacked back-to-back. Interacts with the co-chaperonin GroES.

The protein resides in the cytoplasm. It carries out the reaction ATP + H2O + a folded polypeptide = ADP + phosphate + an unfolded polypeptide.. Functionally, together with its co-chaperonin GroES, plays an essential role in assisting protein folding. The GroEL-GroES system forms a nano-cage that allows encapsulation of the non-native substrate proteins and provides a physical environment optimized to promote and accelerate protein folding. In Burkholderia pseudomallei (strain K96243), this protein is Chaperonin GroEL 1.